We begin with the raw amino-acid sequence, 115 residues long: Nitrogenase-stabilizing/protective protein NifW (115 aa).

This sequence belongs to the NifW family. As to quaternary structure, homotrimer; associates with NifD.

Its function is as follows. May protect the nitrogenase Fe-Mo protein from oxidative damage. In Azotobacter vinelandii (strain DJ / ATCC BAA-1303), this protein is Nitrogenase-stabilizing/protective protein NifW.